Consider the following 206-residue polypeptide: Sclerostin domain-containing protein 1 (206 aa).

The signal sequence occupies residues 1 to 22; that stretch reads MLLSAIHFYGLLLACTFTRSYS. The segment at 40-68 is disordered; that stretch reads APASPSSNSTLNQARNGGRHYAGTGSDRN. The span at 43-54 shows a compositional bias: polar residues; it reads SPSSNSTLNQAR. An N-linked (GlcNAc...) asparagine glycan is attached at N47. 4 disulfides stabilise this stretch: C75/C133, C89/C147, C100/C163, and C104/C165. The region spanning 75 to 170 is the CTCK domain; it reads CRELRSTKYI…TACKCKRYTR (96 aa). The N-linked (GlcNAc...) asparagine glycan is linked to N173. The disordered stretch occupies residues 176 to 206; it reads SHNFEGTSQAKPVQHHKERKRASKSSKHSTS. Positions 188–206 are enriched in basic residues; that stretch reads VQHHKERKRASKSSKHSTS.

The protein belongs to the sclerostin family. Interacts with LRP6.

Its subcellular location is the secreted. In terms of biological role, can activate or inhibit Wnt signaling in a context-dependent manner. Activates the canonical Wnt pathway whereby acts through Disheveled proteins and beta-catenin. Antagonises Wnt signaling through the canonical pathways presumably by blocking accessibility of certain WNTs to their receptors. Induces posterior neural markers via components of the canonical Wnt pathway. This chain is Sclerostin domain-containing protein 1 (SOSTDC1), found in Gallus gallus (Chicken).